Consider the following 578-residue polypeptide: Probable arginine--tRNA ligase, mitochondrial (578 aa).

A mitochondrion-targeting transit peptide spans 1–16 (MACGFRRAIACQLSRV). L-arginine-binding positions include 133 to 135 (SPN), histidine 144, tyrosine 322, aspartate 326, and glutamine 350. Residues 133–144 (SPNVAKKFHVGH) carry the 'HIGH' region motif. N6-acetyllysine is present on lysine 568.

Belongs to the class-I aminoacyl-tRNA synthetase family.

It localises to the mitochondrion membrane. The enzyme catalyses tRNA(Arg) + L-arginine + ATP = L-arginyl-tRNA(Arg) + AMP + diphosphate. In terms of biological role, catalyzes the attachment of arginine to tRNA(Arg) in a two-step reaction: arginine is first activated by ATP to form Arg-AMP and then transferred to the acceptor end of tRNA(Arg). The protein is Probable arginine--tRNA ligase, mitochondrial (RARS2) of Pongo abelii (Sumatran orangutan).